A 298-amino-acid chain; its full sequence is N-acetylmuramic acid 6-phosphate etherase (298 aa).

The region spanning 55–218 (IHAQVSGGGR…STGLMIKSGK (164 aa)) is the SIS domain. The Proton donor role is filled by E83. E114 is a catalytic residue.

It belongs to the GCKR-like family. MurNAc-6-P etherase subfamily. Homodimer.

It carries out the reaction N-acetyl-D-muramate 6-phosphate + H2O = N-acetyl-D-glucosamine 6-phosphate + (R)-lactate. The protein operates within amino-sugar metabolism; 1,6-anhydro-N-acetylmuramate degradation. It functions in the pathway amino-sugar metabolism; N-acetylmuramate degradation. It participates in cell wall biogenesis; peptidoglycan recycling. In terms of biological role, specifically catalyzes the cleavage of the D-lactyl ether substituent of MurNAc 6-phosphate, producing GlcNAc 6-phosphate and D-lactate. Together with AnmK, is also required for the utilization of anhydro-N-acetylmuramic acid (anhMurNAc) either imported from the medium or derived from its own cell wall murein, and thus plays a role in cell wall recycling. The sequence is that of N-acetylmuramic acid 6-phosphate etherase from Escherichia coli O157:H7 (strain EC4115 / EHEC).